The primary structure comprises 330 residues: Probable cell division protein WhiA (330 aa).

A DNA-binding region (H-T-H motif) is located at residues Ser275–Glu308.

Belongs to the WhiA family.

Involved in cell division and chromosome segregation. The polypeptide is Probable cell division protein WhiA (Kocuria rhizophila (strain ATCC 9341 / DSM 348 / NBRC 103217 / DC2201)).